We begin with the raw amino-acid sequence, 90 residues long: Conotoxin TxMMSK-06 (90 aa).

The N-terminal stretch at 1 to 22 (MMSKLGVLLTICLLLFPHTAVP) is a signal peptide. Residues 23-74 (LDGDQHADQPAERLQDDISSEHHPMLNSIRRREQNQFMSFTSVKLRDSRGER) constitute a propeptide that is removed on maturation. The disordered stretch occupies residues 24–43 (DGDQHADQPAERLQDDISSE). Residues 25-43 (GDQHADQPAERLQDDISSE) show a composition bias toward basic and acidic residues. 3 disulfides stabilise this stretch: cysteine 75–cysteine 89, cysteine 76–cysteine 85, and cysteine 81–cysteine 88. Proline 87 is modified (4-hydroxyproline). A Cysteine amide modification is found at cysteine 89.

The protein belongs to the conotoxin M superfamily. Expressed by the venom duct.

It is found in the secreted. This chain is Conotoxin TxMMSK-06, found in Conus textile (Cloth-of-gold cone).